Reading from the N-terminus, the 266-residue chain is MASPGASRGASAATAAAASPRPPQGRSSRRDKYSVLLPTYNERENLPLIVWLLVKSFSESSINYEIIIIDDGSPDGTREVAEQLEKIYGPDRILLRPREKKLGLGTAYIHGIKHATGNYVIIMDADLSHHPKFIPEFIRKQKEGNFDIVSGTRYKGNGGVYGWDLKRKIISRGANFITQILLRPGASDLTGSFRLYRKEVLQKLIEKCVSKGYVFQMEMIVRARQLNYTIGEVPISFVDRVYGESKLGGNEIVSFLKGLLTLFATT.

Residues 1–19 are compositionally biased toward low complexity; the sequence is MASPGASRGASAATAAAAS. The segment at 1 to 31 is disordered; it reads MASPGASRGASAATAAAASPRPPQGRSSRRD. A2 carries the N-acetylalanine modification. Phosphoserine is present on S3. P38, Y40, E42, I69, D71, D124, A125, D126, R153, R240, and K246 together coordinate GDP-alpha-D-mannose. Position 126 (D126) interacts with Mg(2+). Mn(2+) is bound at residue D126.

The protein belongs to the glycosyltransferase 2 family. Component of the dolichol-phosphate mannose (DPM) synthase complex composed of DPM1, DPM2 and DPM3; within the complex, directly interacts with DPM3. This interaction may stabilize DPM1. Mg(2+) is required as a cofactor. The cofactor is Mn(2+). It depends on Ca(2+) as a cofactor.

It is found in the endoplasmic reticulum. The catalysed reaction is a di-trans,poly-cis-dolichyl phosphate + GDP-alpha-D-mannose = a di-trans,poly-cis-dolichyl beta-D-mannosyl phosphate + GDP. The protein operates within protein modification; protein glycosylation. Its function is as follows. Transfers mannose from GDP-mannose to dolichol monophosphate to form dolichol phosphate mannose (Dol-P-Man) which is the mannosyl donor in pathways leading to N-glycosylation, glycosyl phosphatidylinositol membrane anchoring, and O-mannosylation of proteins; catalytic subunit of the dolichol-phosphate mannose (DPM) synthase complex. This chain is Dolichol-phosphate mannosyltransferase subunit 1 (DPM1), found in Cricetulus griseus (Chinese hamster).